We begin with the raw amino-acid sequence, 553 residues long: Putative transport protein YidE (553 aa).

Transmembrane regions (helical) follow at residues 4 to 24, 28 to 48, 65 to 85, 95 to 115, and 158 to 178; these read IALTVSVLALVAVVGLWIGNI, GVGFGIGGVLFGGIIVGHFVD, FGLILFVYTIGIQVGPGFFAS, LFAVLIVIMGGLVTAILHKIF, and MSYAMAYPFGICGILLTMWLM. RCK C-terminal domains lie at 192-276 and 279-361; these read KHES…VIGK and DTSL…VVGN. The next 6 helical transmembrane spans lie at 371–391, 393–413, 437–457, 464–484, 493–513, and 533–553; these read MLPVFIGIGLGVLLGSIPLFV, GFPVALKLGLAGGPLIMALIL, LGIVLFLAVVGLKSGGDFVDT, LSWIGYGIFITAIPLITVGLL, YLTLCGMLAGSMTDPPALAFA, and LVMFLRIITPQLLAVIFWGMG.

It belongs to the AAE transporter (TC 2.A.81) family. YidE subfamily.

The protein localises to the cell membrane. The sequence is that of Putative transport protein YidE from Salmonella newport (strain SL254).